The sequence spans 313 residues: Heterogeneous nuclear ribonucleoproteins C1/C2 (313 aa).

Ala2 carries the post-translational modification N-acetylalanine. Residues Lys8, Lys50, Lys89, and Lys94 each participate in a glycyl lysine isopeptide (Lys-Gly) (interchain with G-Cter in SUMO2) cross-link. The RRM domain occupies 16–87 (SRVFIGNLNT…QVLDINLAAE (72 aa)). Phosphoserine is present on residues Ser113, Ser115, and Ser121. Disordered stretches follow at residues 139–191 (YPAR…KLKG) and 219–313 (EKEQ…EDDS). A Nuclear localization signal motif is present at residues 155–161 (PSKRQRV). 2 positions are modified to phosphoserine: Ser162 and Ser166. Over residues 175 to 186 (SKSGQRGSSSKS) the composition is skewed to low complexity. Lys176 is modified (N6-acetyllysine; alternate). Lys176 is covalently cross-linked (Glycyl lysine isopeptide (Lys-Gly) (interchain with G-Cter in SUMO2); alternate). Positions 191–226 (GDDLQAIKKELTQIKQKVDSLLESLEKIEKEQSKQA) form a coiled coil. Lys224 is covalently cross-linked (Glycyl lysine isopeptide (Lys-Gly) (interchain with G-Cter in SUMO2)). Phosphoserine is present on residues Ser229, Ser231, and Ser232. Lys237 participates in a covalent cross-link: Glycyl lysine isopeptide (Lys-Gly) (interchain with G-Cter in SUMO2). A Glycyl lysine isopeptide (Lys-Gly) (interchain with G-Cter in SUMO2); alternate cross-link involves residue Lys240. Lys240 participates in a covalent cross-link: Glycyl lysine isopeptide (Lys-Gly) (interchain with G-Cter in SUMO1); alternate. 4 positions are modified to phosphoserine: Ser241, Ser246, Ser247, and Ser249. A compositionally biased stretch (basic and acidic residues) spans 250 to 261 (VKKDETNVKMES). Residues Lys251 and Lys252 each participate in a glycyl lysine isopeptide (Lys-Gly) (interchain with G-Cter in SUMO2) cross-link. Lys258 participates in a covalent cross-link: Glycyl lysine isopeptide (Lys-Gly) (interchain with G-Cter in SUMO2); alternate. Residue Lys258 forms a Glycyl lysine isopeptide (Lys-Gly) (interchain with G-Cter in SUMO); alternate linkage. A phosphoserine mark is found at Ser261 and Ser268. Over residues 263-284 (AGADDSAEEGDLLDDDDNEDRG) the composition is skewed to acidic residues. Residues 285 to 294 (DDQLELKDDE) are compositionally biased toward basic and acidic residues. Positions 295–313 (KEPEEGEDDRDSANGEDDS) are enriched in acidic residues. Phosphoserine is present on residues Ser306 and Ser313.

Belongs to the RRM HNRPC family. RALY subfamily. In terms of assembly, tetramer composed of 3 copies of isoform C1 and 1 copy of isoform C2. Assembly of 3 tetramers with bound pre-mRNA gives rise to a 19S complex that interacts with HNRNPA2B1 tetramers. Component of the 40S hnRNP particle. Identified in the spliceosome C complex. Interacts with IGF2BP1. Interacts with DHX9; this interaction is direct, enhanced probably by their concomitant binding to RNA and mediates the attachment to actin filaments. Interacts with PPIA/CYPA. In terms of processing, phosphorylated on Ser-268 and Ser-306 in resting cells. Post-translationally, sumoylated. Sumoylation reduces affinity for mRNA. Ubiquitinated and degraded after nucleo-cytoplasmic transport by YWHAE.

Its subcellular location is the nucleus. Its function is as follows. Binds pre-mRNA and nucleates the assembly of 40S hnRNP particles. Interacts with poly-U tracts in the 3'-UTR or 5'-UTR of mRNA and modulates the stability and the level of translation of bound mRNA molecules. Single HNRNPC tetramers bind 230-240 nucleotides. Trimers of HNRNPC tetramers bind 700 nucleotides. May play a role in the early steps of spliceosome assembly and pre-mRNA splicing. N6-methyladenosine (m6A) has been shown to alter the local structure in mRNAs and long non-coding RNAs (lncRNAs) via a mechanism named 'm(6)A-switch', facilitating binding of HNRNPC, leading to regulation of mRNA splicing. The protein is Heterogeneous nuclear ribonucleoproteins C1/C2 (Hnrnpc) of Mus musculus (Mouse).